The chain runs to 153 residues: Mediator of RNA polymerase II transcription subunit 22 (153 aa).

This sequence belongs to the Mediator complex subunit 22 family. Component of the Mediator complex.

Its subcellular location is the nucleus. Functionally, component of the Mediator complex, a coactivator involved in the regulated transcription of nearly all RNA polymerase II-dependent genes. Mediator functions as a bridge to convey information from gene-specific regulatory proteins to the basal RNA polymerase II transcription machinery. Mediator is recruited to promoters by direct interactions with regulatory proteins and serves as a scaffold for the assembly of a functional preinitiation complex with RNA polymerase II and the general transcription factors. The polypeptide is Mediator of RNA polymerase II transcription subunit 22 (mdt-22) (Caenorhabditis briggsae).